The following is a 366-amino-acid chain: Nodulation protein NolL (366 aa).

A run of 9 helical transmembrane segments spans residues phenylalanine 27 to tyrosine 47, isoleucine 62 to isoleucine 82, leucine 98 to phenylalanine 118, phenylalanine 140 to leucine 160, isoleucine 164 to leucine 184, histidine 212 to glycine 232, valine 253 to histidine 273, leucine 286 to phenylalanine 306, and isoleucine 324 to isoleucine 344.

Belongs to the acyltransferase 3 family.

It is found in the cell membrane. Thought to be an acetyltransferase that modifies the fucose of the nod factor. This is Nodulation protein NolL (nolL) from Sinorhizobium fredii (strain NBRC 101917 / NGR234).